We begin with the raw amino-acid sequence, 177 residues long: Secretion monitor (177 aa).

The signal sequence occupies residues 1–37 (MIGILNRWRQFGRRYFWPHLLLGMVAASLGVPSNLSG).

This sequence belongs to the SecM family.

It is found in the cytoplasm. Its subcellular location is the cytosol. The protein resides in the periplasm. Regulates secA expression by translational coupling of the secM secA operon. Translational pausing at a specific Pro residue 5 residues before the end of the protein may allow disruption of a mRNA repressor helix that normally suppresses secA translation initiation. In Yersinia pseudotuberculosis serotype O:1b (strain IP 31758), this protein is Secretion monitor.